Consider the following 443-residue polypeptide: Thymidine phosphorylase (443 aa).

Belongs to the thymidine/pyrimidine-nucleoside phosphorylase family. In terms of assembly, homodimer.

The catalysed reaction is thymidine + phosphate = 2-deoxy-alpha-D-ribose 1-phosphate + thymine. It participates in pyrimidine metabolism; dTMP biosynthesis via salvage pathway; dTMP from thymine: step 1/2. The enzymes which catalyze the reversible phosphorolysis of pyrimidine nucleosides are involved in the degradation of these compounds and in their utilization as carbon and energy sources, or in the rescue of pyrimidine bases for nucleotide synthesis. The protein is Thymidine phosphorylase of Shewanella frigidimarina (strain NCIMB 400).